We begin with the raw amino-acid sequence, 142 residues long: Large ribosomal subunit protein uL16 (142 aa).

It belongs to the universal ribosomal protein uL16 family. In terms of assembly, part of the 50S ribosomal subunit.

In terms of biological role, binds 23S rRNA and is also seen to make contacts with the A and possibly P site tRNAs. This is Large ribosomal subunit protein uL16 from Aquifex aeolicus (strain VF5).